The chain runs to 179 residues: Transcriptional regulator ICP22 homolog (179 aa).

Positions 1–12 (MSRDRDRARPDT) are enriched in basic and acidic residues. A disordered region spans residues 1–40 (MSRDRDRARPDTRLSSSDNESDDEDYQLPHSHPEYGSDSS).

The protein belongs to the herpesviridae ICP22 family.

The polypeptide is Transcriptional regulator ICP22 homolog (MDV088) (Gallid herpesvirus 2 (strain Chicken/Md5/ATCC VR-987) (GaHV-2)).